The following is a 314-amino-acid chain: MMRLIRTLPLRCFKTRIRRQGSLLCLRCFSSYSKPLLQKSMSLKNIQLSDLSSSPLSKNKEKQEKPEKENEGKHSIGLLDRFSEDFITQGNGLKPTTSQNQLDTIKFYQMLRERGNFSDEQCKIIIALLLQLLNDQFYSCYNDLFLRDMELNKQSHLFSSLETELKFAIQNSRDTQLNEHHLQLLKLKRELNSIHDELNEIIIDLLQKDAKLEFNNQKLENTLLYRQLNLKLNDCSNKIQTKILGDIRSHIENLRWQTTRSGLLVILVLVCSIMIGVSASKKERPGLQEPEEPEILAPKEDIDTTFPQDQHDID.

The N-terminal 29 residues, 1-29 (MMRLIRTLPLRCFKTRIRRQGSLLCLRCF), are a transit peptide targeting the mitochondrion. A disordered region spans residues 52–74 (SSSPLSKNKEKQEKPEKENEGKH). Basic and acidic residues predominate over residues 58–74 (KNKEKQEKPEKENEGKH). The stretch at 177–207 (LNEHHLQLLKLKRELNSIHDELNEIIIDLLQ) forms a coiled coil. Residues 262 to 279 (GLLVILVLVCSIMIGVSA) form a helical membrane-spanning segment. Residues 281–314 (KKERPGLQEPEEPEILAPKEDIDTTFPQDQHDID) form a disordered region.

It is found in the mitochondrion membrane. This is an uncharacterized protein from Saccharomyces cerevisiae (strain ATCC 204508 / S288c) (Baker's yeast).